The following is a 79-amino-acid chain: Centromere protein X (79 aa).

Met-1 is modified (N-acetylmethionine).

It belongs to the CENP-X/MHF2 family. As to quaternary structure, heterodimer with CENPX, sometimes called MHF; this interaction stabilizes both partners. MHF heterodimers can assemble to form tetrameric structures. MHF also coassemble with CENPT-CENPW heterodimers at centromeres to form the tetrameric CENP-T-W-S-X complex. Forms a discrete complex with FANCM and CENPX, called FANCM-MHF; this interaction, probably mediated by direct binding between CENPS and FANCM, leads to synergistic activation of double-stranded DNA binding and strongly stimulates FANCM-mediated DNA remodeling. Recruited by FANCM to the Fanconi anemia (FA) core complex, which consists of CENPS, CENPX, FANCA, FANCB, FANCC, FANCE, FANCF, FANCG, FANCL, FANCM, FAAP24 and FAAP100. The FA core complex associates with Bloom syndrome (BLM) complex, which consists of at least BLM, DNA topoisomerase 3-alpha (TOP3A), RMI1/BLAP75, RPA1/RPA70 and RPA2/RPA32. The super complex between FA and BLM is called BRAFT.

The protein resides in the nucleus. It is found in the chromosome. It localises to the centromere. Its subcellular location is the kinetochore. Its function is as follows. DNA-binding component of the Fanconi anemia (FA) core complex. Required for the normal activation of the FA pathway, leading to monoubiquitination of the FANCI-FANCD2 complex in response to DNA damage, cellular resistance to DNA cross-linking drugs, and prevention of chromosomal breakage. In complex with CENPS (MHF heterodimer), crucial cofactor for FANCM in both binding and ATP-dependent remodeling of DNA. Stabilizes FANCM. In complex with CENPS and FANCM (but not other FANC proteins), rapidly recruited to blocked forks and promotes gene conversion at blocked replication forks. In complex with CENPS, CENPT and CENPW (CENP-T-W-S-X heterotetramer), involved in the formation of a functional kinetochore outer plate, which is essential for kinetochore-microtubule attachment and faithful mitotic progression. As a component of MHF and CENP-T-W-S-X complexes, binds DNA and bends it to form a nucleosome-like structure. DNA-binding function is fulfilled in the presence of CENPS, with the following preference for DNA substates: Holliday junction &gt; double-stranded &gt; splay arm &gt; single-stranded. Does not bind DNA on its own. The sequence is that of Centromere protein X (CENPX) from Bos taurus (Bovine).